The following is a 477-amino-acid chain: Adenosylhomocysteinase (477 aa).

Substrate contacts are provided by T63, D142, and E202. An NAD(+)-binding site is contributed by 203–205; that stretch reads TTT. Positions 232 and 236 each coordinate substrate. NAD(+) contacts are provided by residues N237, 266–271, E289, N324, 345–347, and N390; these read GYGDVG and IGH.

Belongs to the adenosylhomocysteinase family. It depends on NAD(+) as a cofactor.

Its subcellular location is the cytoplasm. It catalyses the reaction S-adenosyl-L-homocysteine + H2O = L-homocysteine + adenosine. Its pathway is amino-acid biosynthesis; L-homocysteine biosynthesis; L-homocysteine from S-adenosyl-L-homocysteine: step 1/1. May play a key role in the regulation of the intracellular concentration of adenosylhomocysteine. This is Adenosylhomocysteinase from Methylibium petroleiphilum (strain ATCC BAA-1232 / LMG 22953 / PM1).